A 245-amino-acid polypeptide reads, in one-letter code: tRNA1(Val) (adenine(37)-N6)-methyltransferase (245 aa).

The protein belongs to the methyltransferase superfamily. tRNA (adenine-N(6)-)-methyltransferase family.

Its subcellular location is the cytoplasm. It carries out the reaction adenosine(37) in tRNA1(Val) + S-adenosyl-L-methionine = N(6)-methyladenosine(37) in tRNA1(Val) + S-adenosyl-L-homocysteine + H(+). Functionally, specifically methylates the adenine in position 37 of tRNA(1)(Val) (anticodon cmo5UAC). In Escherichia coli (strain K12), this protein is tRNA1(Val) (adenine(37)-N6)-methyltransferase (yfiC).